Here is a 66-residue protein sequence, read N- to C-terminus: Putative transmembrane protein ORF66 (66 aa).

Residues 1–6 (MSDVDD) are Cytoplasmic-facing. Residues 7–27 (TIVDSIAIVGAILIGIFLIVV) form a helical membrane-spanning segment. Topologically, residues 28–39 (SVSNTSLFNNTE) are extracellular. Residues 40–60 (YDSMINSVLVIISSVIAYTLG) traverse the membrane as a helical segment. The Cytoplasmic segment spans residues 61 to 66 (KRRSKS).

Its subcellular location is the host membrane. This Acidianus filamentous virus 2 (isolate Italy/Pozzuoli) (AFV-2) protein is Putative transmembrane protein ORF66.